The primary structure comprises 631 residues: tRNA 5-methylaminomethyl-2-thiouridine biosynthesis bifunctional protein MnmC (631 aa).

The tRNA (mnm(5)s(2)U34)-methyltransferase stretch occupies residues Met1–Pro243. Residues Ile261–Val631 form an FAD-dependent cmnm(5)s(2)U34 oxidoreductase region.

It in the N-terminal section; belongs to the methyltransferase superfamily. tRNA (mnm(5)s(2)U34)-methyltransferase family. This sequence in the C-terminal section; belongs to the DAO family. The cofactor is FAD.

The protein resides in the cytoplasm. It catalyses the reaction 5-aminomethyl-2-thiouridine(34) in tRNA + S-adenosyl-L-methionine = 5-methylaminomethyl-2-thiouridine(34) in tRNA + S-adenosyl-L-homocysteine + H(+). Its function is as follows. Catalyzes the last two steps in the biosynthesis of 5-methylaminomethyl-2-thiouridine (mnm(5)s(2)U) at the wobble position (U34) in tRNA. Catalyzes the FAD-dependent demodification of cmnm(5)s(2)U34 to nm(5)s(2)U34, followed by the transfer of a methyl group from S-adenosyl-L-methionine to nm(5)s(2)U34, to form mnm(5)s(2)U34. The polypeptide is tRNA 5-methylaminomethyl-2-thiouridine biosynthesis bifunctional protein MnmC (Marinobacter nauticus (strain ATCC 700491 / DSM 11845 / VT8) (Marinobacter aquaeolei)).